The sequence spans 357 residues: Glutamate 5-kinase (357 aa).

Lys-7 contributes to the ATP binding site. The substrate site is built by Ser-43, Asp-130, and Asn-142. ATP is bound by residues 162 to 163 (TD) and 205 to 211 (TGGMTTK). The 72-residue stretch at 270–341 (EGELCLDQGA…QALSVVTDAE (72 aa)) folds into the PUA domain.

This sequence belongs to the glutamate 5-kinase family.

Its subcellular location is the cytoplasm. It catalyses the reaction L-glutamate + ATP = L-glutamyl 5-phosphate + ADP. It participates in amino-acid biosynthesis; L-proline biosynthesis; L-glutamate 5-semialdehyde from L-glutamate: step 1/2. Catalyzes the transfer of a phosphate group to glutamate to form L-glutamate 5-phosphate. The sequence is that of Glutamate 5-kinase from Synechococcus sp. (strain CC9902).